The chain runs to 418 residues: FAD-dependent monooxygenase fmqB (418 aa).

Val12 and Arg68 together coordinate FAD. Residue Arg147 is part of the active site. Residues Asp272 and Gly285 each coordinate FAD.

This sequence belongs to the paxM FAD-dependent monooxygenase family.

The protein localises to the cytoplasm. It participates in alkaloid biosynthesis. Its function is as follows. FAD-dependent monooxygenase; part of the gene cluster that mediates the biosynthesis of the antitumor fumiquinazolines that confer a dual-usage capability to defend against phagocytes in the environment and animal hosts. The simplest member is fumiquinazoline F (FQF) with a 6-6-6 tricyclic core derived from anthranilic acid (Ant), tryptophan (Trp), and alanine (Ala). The trimodular NRPS fmqA is responsible for FQF formation. Modules 1, 2 and 3 of fmqA are predicted to activate and load Ant, Trp and Ala, respectively, providing for the assembly of an Ant-Trp-Ala-S-enzyme intermediate that would undergo double cyclization for chain release and generation of the tricyclic 6-6-6 product fumiquinazoline F. The presence of an E domain predicted for module 2 of fmqA is consistent with epimerization of L-Trp to D-Trp during assembly to generate the R-stereocenter at C14 of FQF. The FAD-dependent monooxygenase fmqB and the monomodular NRPS fmqC then maturate FQF to FQA. FmqB oxidizes the 2',3'-double bond of the indole side chain of FQF, and fmqC activates L-Ala as the adenylate, installs it as the pantetheinyl thioester on its carrier protein domain, and acylates the oxidized indole for subsequent intramolecular cyclization to create the 6-5-5-imidazolindolone of FQA. The FAD-linked oxidoreductase fmqD introduces a third layer of scaffold complexity by converting FQA to the spirohemiaminal FQC, presumably by catalyzing the formation of a transient imine within the pyrazinone ring. FQC subsequently converts nonenzymatically to the known cyclic aminal FQD. This is FAD-dependent monooxygenase fmqB from Aspergillus fumigatus (strain ATCC MYA-4609 / CBS 101355 / FGSC A1100 / Af293) (Neosartorya fumigata).